Reading from the N-terminus, the 556-residue chain is Formate--tetrahydrofolate ligase (556 aa).

65 to 72 (TPAGEGKS) lines the ATP pocket.

This sequence belongs to the formate--tetrahydrofolate ligase family.

The catalysed reaction is (6S)-5,6,7,8-tetrahydrofolate + formate + ATP = (6R)-10-formyltetrahydrofolate + ADP + phosphate. It participates in one-carbon metabolism; tetrahydrofolate interconversion. The polypeptide is Formate--tetrahydrofolate ligase (Clostridium perfringens (strain 13 / Type A)).